A 156-amino-acid polypeptide reads, in one-letter code: MNINATILGQAIAFVLFVWFCMKYVWPPMMAAIEKRQKEIADGLASAERAKKDLNLAQANATDQLKKAKADAQVIIEQANKRRAQILDEAKAEAEAERNKIVAQAQAEIEAERKRAREELRKQVAVLAIAGAEKIIERSVDEAANSDIVDKLVAEL.

Residues 7–26 form a helical membrane-spanning segment; sequence ILGQAIAFVLFVWFCMKYVW.

This sequence belongs to the ATPase B chain family. As to quaternary structure, F-type ATPases have 2 components, F(1) - the catalytic core - and F(0) - the membrane proton channel. F(1) has five subunits: alpha(3), beta(3), gamma(1), delta(1), epsilon(1). F(0) has three main subunits: a(1), b(2) and c(10-14). The alpha and beta chains form an alternating ring which encloses part of the gamma chain. F(1) is attached to F(0) by a central stalk formed by the gamma and epsilon chains, while a peripheral stalk is formed by the delta and b chains.

The protein resides in the cell inner membrane. F(1)F(0) ATP synthase produces ATP from ADP in the presence of a proton or sodium gradient. F-type ATPases consist of two structural domains, F(1) containing the extramembraneous catalytic core and F(0) containing the membrane proton channel, linked together by a central stalk and a peripheral stalk. During catalysis, ATP synthesis in the catalytic domain of F(1) is coupled via a rotary mechanism of the central stalk subunits to proton translocation. Its function is as follows. Component of the F(0) channel, it forms part of the peripheral stalk, linking F(1) to F(0). The polypeptide is ATP synthase subunit b (Pectobacterium atrosepticum (strain SCRI 1043 / ATCC BAA-672) (Erwinia carotovora subsp. atroseptica)).